The chain runs to 258 residues: Hydroxyacylglutathione hydrolase cytoplasmic (258 aa).

Positions 54 and 56 each coordinate Zn(2+). Residues D58 and H59 each contribute to the Fe cation site. Residues H112 and D135 each contribute to the Zn(2+) site. D135 contributes to the Fe cation binding site. Substrate contacts are provided by residues 144 to 146 (KFF) and 174 to 176 (HEY). H174 is a Fe cation binding site.

Belongs to the metallo-beta-lactamase superfamily. Glyoxalase II family. In terms of assembly, homodimer. It depends on Fe(2+) as a cofactor. Zn(2+) serves as cofactor. Fe(3+) is required as a cofactor. Mainly expressed in flowers and flower buds. Also detected in roots and leaves.

It localises to the cytoplasm. It carries out the reaction an S-(2-hydroxyacyl)glutathione + H2O = a 2-hydroxy carboxylate + glutathione + H(+). Its pathway is secondary metabolite metabolism; methylglyoxal degradation; (R)-lactate from methylglyoxal: step 2/2. Functionally, thiolesterase that catalyzes the hydrolysis of S-D-lactoyl-glutathione to form glutathione and D-lactic acid. The protein is Hydroxyacylglutathione hydrolase cytoplasmic (GLX2-2) of Arabidopsis thaliana (Mouse-ear cress).